The chain runs to 179 residues: ADP-ribosylation factor (179 aa).

Gly-2 carries the N-myristoyl glycine lipid modification. GTP-binding positions include 24–31 (GLDAAGKT), 67–71 (DVGGQ), and 126–129 (NKQD).

Belongs to the small GTPase superfamily. Arf family.

The protein resides in the golgi apparatus. GTP-binding protein involved in protein trafficking; may modulate vesicle budding and uncoating within the Golgi apparatus. The polypeptide is ADP-ribosylation factor (ARF1) (Candida albicans (strain SC5314 / ATCC MYA-2876) (Yeast)).